We begin with the raw amino-acid sequence, 108 residues long: ATP synthase peripheral stalk subunit F6, mitochondrial (108 aa).

A mitochondrion-targeting transit peptide spans 1-32; it reads MVLQRIFRLSSVLRSAVSVHLKRNIGVTAVAF. N6-acetyllysine occurs at positions 41, 46, and 79. N6-acetyllysine; alternate occurs at positions 84, 94, and 99. An N6-succinyllysine; alternate mark is found at Lys84, Lys94, and Lys99. Lys105 carries the N6-acetyllysine modification. A Phosphoserine modification is found at Ser108.

The protein belongs to the eukaryotic ATPase subunit F6 family. As to quaternary structure, component of the ATP synthase complex composed at least of ATP5F1A/subunit alpha, ATP5F1B/subunit beta, ATP5MC1/subunit c (homooctomer), MT-ATP6/subunit a, MT-ATP8/subunit 8, ATP5ME/subunit e, ATP5MF/subunit f, ATP5MG/subunit g, ATP5MK/subunit k, ATP5MJ/subunit j, ATP5F1C/subunit gamma, ATP5F1D/subunit delta, ATP5F1E/subunit epsilon, ATP5PF/subunit F6, ATP5PB/subunit b, ATP5PD/subunit d, ATP5PO/subunit OSCP. ATP synthase complex consists of a soluble F(1) head domain (subunits alpha(3) and beta(3)) - the catalytic core - and a membrane F(0) domain - the membrane proton channel (subunits c, a, 8, e, f, g, k and j). These two domains are linked by a central stalk (subunits gamma, delta, and epsilon) rotating inside the F1 region and a stationary peripheral stalk (subunits F6, b, d, and OSCP).

It localises to the mitochondrion. It is found in the mitochondrion inner membrane. Subunit F6, of the mitochondrial membrane ATP synthase complex (F(1)F(0) ATP synthase or Complex V) that produces ATP from ADP in the presence of a proton gradient across the membrane which is generated by electron transport complexes of the respiratory chain. ATP synthase complex consist of a soluble F(1) head domain - the catalytic core - and a membrane F(1) domain - the membrane proton channel. These two domains are linked by a central stalk rotating inside the F(1) region and a stationary peripheral stalk. During catalysis, ATP synthesis in the catalytic domain of F(1) is coupled via a rotary mechanism of the central stalk subunits to proton translocation. In vivo, can only synthesize ATP although its ATP hydrolase activity can be activated artificially in vitro. Part of the complex F(0) domain. Part of the complex F(0) domain and the peripheric stalk, which acts as a stator to hold the catalytic alpha(3)beta(3) subcomplex and subunit a/ATP6 static relative to the rotary elements. The sequence is that of ATP synthase peripheral stalk subunit F6, mitochondrial from Mus musculus (Mouse).